A 392-amino-acid chain; its full sequence is 3-ketoacyl-CoA thiolase (392 aa).

The active-site Acyl-thioester intermediate is the Cys95. Catalysis depends on proton acceptor residues His347 and Cys377.

This sequence belongs to the thiolase-like superfamily. Thiolase family. As to quaternary structure, heterotetramer of two alpha chains (FadB) and two beta chains (FadA).

The protein resides in the cytoplasm. The catalysed reaction is an acyl-CoA + acetyl-CoA = a 3-oxoacyl-CoA + CoA. It functions in the pathway lipid metabolism; fatty acid beta-oxidation. In terms of biological role, catalyzes the final step of fatty acid oxidation in which acetyl-CoA is released and the CoA ester of a fatty acid two carbons shorter is formed. This is 3-ketoacyl-CoA thiolase from Chromohalobacter salexigens (strain ATCC BAA-138 / DSM 3043 / CIP 106854 / NCIMB 13768 / 1H11).